Here is a 360-residue protein sequence, read N- to C-terminus: Small ribosomal subunit protein mS22 (360 aa).

The residue at position 54 (Ser54) is a Phosphoserine. An N6-acetyllysine modification is found at Lys211.

The protein belongs to the mitochondrion-specific ribosomal protein mS22 family. As to quaternary structure, component of the mitochondrial small ribosomal subunit (mt-SSU). Mature mammalian 55S mitochondrial ribosomes consist of a small (28S) and a large (39S) subunit. The 28S small subunit contains a 12S ribosomal RNA (12S mt-rRNA) and 30 different proteins. The 39S large subunit contains a 16S rRNA (16S mt-rRNA), a copy of mitochondrial valine transfer RNA (mt-tRNA(Val)), which plays an integral structural role, and 52 different proteins.

Its subcellular location is the mitochondrion. The protein is Small ribosomal subunit protein mS22 (MRPS22) of Homo sapiens (Human).